The chain runs to 121 residues: MEQARDHLHLRWTTEQHMPEVEVQVKYRTAALSNQECQLYLRHSQQQQVLVVDFQAKLRQVFITETPRCGKKPYWNNEEAESKQNPGSIYCLLLLIRGGMSDSLIKREISNFEIVSKNKKN.

It belongs to the SNURF family.

The sequence is that of Putative SNURF-like protein (SNURFL) from Homo sapiens (Human).